The chain runs to 542 residues: Neurofilament light polypeptide (542 aa).

Residue Ser2 is modified to N-acetylserine. A head region spans residues 2–93 (SSFSYEPYFS…KSIRTQEKAQ (92 aa)). An O-linked (GlcNAc) threonine glycan is attached at Thr21. Arg23 carries the post-translational modification Asymmetric dimethylarginine; alternate. Arg23 is modified (omega-N-methylarginine; alternate). O-linked (GlcNAc) serine glycosylation is present at Ser27. Position 30 is an omega-N-methylarginine (Arg30). Tyr43 carries the post-translational modification Phosphotyrosine. Residues Ser56, Ser67, and Ser103 each carry the phosphoserine modification. Positions 90–401 (EKAQLQDLND…KLLEGEETRL (312 aa)) constitute an IF rod domain. Residues 94–125 (LQDLNDRFASFIERVHELEQQNKVLEAELLVL) are coil 1A. The tract at residues 126–138 (RQKHSEPSRFRAL) is linker 1. The interval 139-234 (YEQEIRDLRL…KVHEEEIAEL (96 aa)) is coil 1B. Residues 235 to 253 (QAQIQYAQISVEMDVSSKP) are linker 12. Residues 254–272 (DLSAALKDIRAQYEKLAAK) form a coil 2A region. A linker 2 region spans residues 273–281 (NMQNAEEWF). Residues 282-397 (KSRFTVLTES…AAYRKLLEGE (116 aa)) are coil 2B. An epitope; recognized by IF-specific monoclonal antibody region spans residues 382–392 (ALDIEIAAYRK). The interval 398–444 (ETRLSFTSVGSITSGYSQSSQVFGRSAYSGLQSSSYLMSARAFPAYY) is tail, subdomain A. The tail stretch occupies residues 398 to 542 (ETRLSFTSVG…GEEQAAKKKD (145 aa)). Positions 445 to 542 (TSHVQEEQSE…GEEQAAKKKD (98 aa)) are tail, subdomain B (acidic). The disordered stretch occupies residues 451–542 (EQSEVEETIE…GEEQAAKKKD (92 aa)). Ser453 bears the Phosphoserine mark. The span at 460-471 (EATKAEEAKDEP) shows a compositional bias: basic and acidic residues. Acidic residues predominate over residues 472–527 (PSEGEAEEEEKEKEEGEEEEGAEEEEAAKDESEDAKEEEGGEGEEEDTKESEEEEK). Residues Ser473 and Ser503 each carry the phosphoserine modification. Thr519 bears the Phosphothreonine mark. Residues Ser522 and Ser531 each carry the phosphoserine modification. Residues 528–542 (KEESAGEEQAAKKKD) show a composition bias toward basic and acidic residues.

It belongs to the intermediate filament family. In terms of assembly, forms homodimers (in vitro). Forms heterodimers with NEFH or NEFM; which can further hetero-oligomerize (in vitro). Forms heterodimers with INA (in vitro). Interacts with ARHGEF28. Interacts with TRIM2. In terms of processing, O-glycosylated; contains three N-acetylglucosamine side chains. Phosphorylated in the head and rod regions by the PKC kinase PKN1, leading to the inhibition of polymerization. Post-translationally, ubiquitinated in the presence of TRIM2 and UBE2D1. As to expression, expressed in the dorsal root ganglion neurons (at protein level).

It localises to the cell projection. It is found in the axon. Its subcellular location is the cytoplasm. The protein resides in the cytoskeleton. In terms of biological role, neurofilaments usually contain three intermediate filament proteins: NEFL, NEFM, and NEFH which are involved in the maintenance of neuronal caliber. May additionally cooperate with the neuronal intermediate filament proteins PRPH and INA to form neuronal filamentous networks. This is Neurofilament light polypeptide (Nefl) from Rattus norvegicus (Rat).